Consider the following 45-residue polypeptide: YKRCHKKEGHCFPKTVICLPPSSDFGKMDCRWKWKCCKKGSVNNA.

3 cysteine pairs are disulfide-bonded: Cys4–Cys36, Cys11–Cys30, and Cys18–Cys37.

It belongs to the crotamine-myotoxin family. Monomer. As to expression, expressed by the venom gland.

The protein localises to the secreted. Functionally, cationic peptide that possesses multiple functions. It acts as a cell-penetrating peptide (CPP), and as a potent voltage-gated potassium channel (Kv) inhibitor. It exhibits antimicrobial activities, hind limb paralysis, and severe muscle necrosis by a non-enzymatic mechanism. The protein is Myotoxin-2 of Crotalus viridis viridis (Prairie rattlesnake).